The following is a 451-amino-acid chain: Phosphoglucosamine mutase (451 aa).

Catalysis depends on serine 107, which acts as the Phosphoserine intermediate. The Mg(2+) site is built by serine 107, aspartate 246, aspartate 248, and aspartate 250. A Phosphoserine modification is found at serine 107.

It belongs to the phosphohexose mutase family. It depends on Mg(2+) as a cofactor. Post-translationally, activated by phosphorylation.

The catalysed reaction is alpha-D-glucosamine 1-phosphate = D-glucosamine 6-phosphate. Catalyzes the conversion of glucosamine-6-phosphate to glucosamine-1-phosphate. The sequence is that of Phosphoglucosamine mutase from Burkholderia ambifaria (strain MC40-6).